Reading from the N-terminus, the 571-residue chain is Urease subunit alpha (571 aa).

A Urease domain is found at 133–571 (GGIDTHVHFI…LPLAQRYFLF (439 aa)). The Ni(2+) site is built by His138, His140, and Lys221. Lys221 bears the N6-carboxylysine mark. His223 serves as a coordination point for substrate. Residues His250 and His276 each contribute to the Ni(2+) site. Catalysis depends on His324, which acts as the Proton donor. Asp364 is a binding site for Ni(2+).

This sequence belongs to the metallo-dependent hydrolases superfamily. Urease alpha subunit family. As to quaternary structure, heterotrimer of UreA (gamma), UreB (beta) and UreC (alpha) subunits. Three heterotrimers associate to form the active enzyme. It depends on Ni cation as a cofactor. In terms of processing, carboxylation allows a single lysine to coordinate two nickel ions.

The protein resides in the cytoplasm. The catalysed reaction is urea + 2 H2O + H(+) = hydrogencarbonate + 2 NH4(+). It participates in nitrogen metabolism; urea degradation; CO(2) and NH(3) from urea (urease route): step 1/1. The chain is Urease subunit alpha from Staphylococcus carnosus (strain TM300).